Reading from the N-terminus, the 702-residue chain is Ribosomal RNA large subunit methyltransferase K/L (702 aa).

Positions 43-154 (LIYQSLMWSR…KETAHISLDL (112 aa)) constitute a THUMP domain.

This sequence belongs to the methyltransferase superfamily. RlmKL family.

The protein localises to the cytoplasm. The enzyme catalyses guanosine(2445) in 23S rRNA + S-adenosyl-L-methionine = N(2)-methylguanosine(2445) in 23S rRNA + S-adenosyl-L-homocysteine + H(+). It carries out the reaction guanosine(2069) in 23S rRNA + S-adenosyl-L-methionine = N(2)-methylguanosine(2069) in 23S rRNA + S-adenosyl-L-homocysteine + H(+). Specifically methylates the guanine in position 2445 (m2G2445) and the guanine in position 2069 (m7G2069) of 23S rRNA. The protein is Ribosomal RNA large subunit methyltransferase K/L of Enterobacter sp. (strain 638).